The sequence spans 332 residues: Trans-2'-carboxybenzalpyruvate hydratase-aldolase (332 aa).

K178 functions as the Schiff-base intermediate with substrate in the catalytic mechanism.

The protein belongs to the DapA family. Homotrimer.

The catalysed reaction is (3Z)-4-(2-carboxyphenyl)-2-oxobut-3-enoate + H2O = 2-formylbenzoate + pyruvate. With respect to regulation, not inhibited by sodium borohydride or sodium pyruvate. Unaffected by EDTA, EGTA, Mn(2+), Mg(2+) and Ca(2+). Functionally, plays a role in phenanthrene catabolism. Catalyzes the transformation of trans-2'-carboxbenzalpyruvate to 2-formylbenzoate and pyruvate. In Nocardioides sp. (strain KP7), this protein is Trans-2'-carboxybenzalpyruvate hydratase-aldolase.